Here is a 509-residue protein sequence, read N- to C-terminus: Leucine-rich repeat-containing protein 14 (509 aa).

The stretch at 111-146 is one LRR 1; degenerate repeat; that stretch reads RQRLRLLDMTGMQEEGLEQNPDTMSLWSRTVTLAKA. The stretch at 210–234 is one LRR 2; degenerate repeat; it reads RLQCRDFRAEELSLRSTAGLLELLN. Residues 235–262 form an LRR 3; degenerate repeat; that stretch reads PGSVRQIDLRFNNLGLSGLNVLLPHMAK. One copy of the LRR 4; degenerate repeat lies at 263-298; that stretch reads FSHLQSLKLPYSNVDVRRLSPVMEEGLQSFASQLGQ. LRR repeat units follow at residues 299-323, 324-355, 356-374, 380-407, and 408-432; these read LGAL…LGGL, QRPL…SSLR, KLDL…PFLH, SGHL…ILCR, and CSWL…VLQN.

Belongs to the PRAME family. LRRC14 subfamily.

The protein localises to the cytoplasm. In Xenopus laevis (African clawed frog), this protein is Leucine-rich repeat-containing protein 14.